Here is a 261-residue protein sequence, read N- to C-terminus: MRILITNDDGINAPGLEVLEQIALELAGPEGEVWTVAPAFEQSGVSHAISYTHPMMIAKLGPRRYAAEGSPADCVLAALYDVLQGARPDLVLSGVNRGNNSAENVLYSGTVGGALEAALQGLPAIALSQFLGPETEGLADPFECARTHGARIVRLLLERGLWDGEDYRLFYNVNFPPVPAANLRGHRVAAQGFRRDTSFGVEPHMSPSGRRFLWIRGGAQQSPTLPGTDAAVNLEGFVSITPLRADLTAHDRLAELEALIG.

A divalent metal cation is bound by residues aspartate 8, aspartate 9, serine 43, and asparagine 96.

This sequence belongs to the SurE nucleotidase family. A divalent metal cation serves as cofactor.

The protein resides in the cytoplasm. It catalyses the reaction a ribonucleoside 5'-phosphate + H2O = a ribonucleoside + phosphate. Its function is as follows. Nucleotidase that shows phosphatase activity on nucleoside 5'-monophosphates. In Cereibacter sphaeroides (strain ATCC 17023 / DSM 158 / JCM 6121 / CCUG 31486 / LMG 2827 / NBRC 12203 / NCIMB 8253 / ATH 2.4.1.) (Rhodobacter sphaeroides), this protein is 5'-nucleotidase SurE.